A 193-amino-acid polypeptide reads, in one-letter code: Large ribosomal subunit protein bL21 (193 aa).

The protein belongs to the bacterial ribosomal protein bL21 family. In terms of assembly, part of the 50S ribosomal subunit. Contacts protein L20.

Its function is as follows. This protein binds to 23S rRNA in the presence of protein L20. In Ruegeria pomeroyi (strain ATCC 700808 / DSM 15171 / DSS-3) (Silicibacter pomeroyi), this protein is Large ribosomal subunit protein bL21.